Consider the following 361-residue polypeptide: KDEL-tailed cysteine endopeptidase CEP2 (361 aa).

The signal sequence occupies residues 1–20; that stretch reads MKKLLLIFLFSLVILQTACG. A propeptide spans 21 to 127 (activation peptide); that stretch reads FDYDDKEIES…FMYDHENLSK (107 aa). N-linked (GlcNAc...) asparagine glycans are attached at residues N75 and N124. Disulfide bonds link C149/C191, C183/C224, and C282/C333. C152 is an active-site residue. Residues H288 and N308 contribute to the active site. Residues 358-361 carry the Prevents secretion from ER motif; that stretch reads KDEL.

It belongs to the peptidase C1 family. In terms of tissue distribution, expressed in roots, stems, rosette and cauline leaves, flowers, buds and green siliques. Found in the tip of young primary leaves, in very young root tips and at later stages in all tissues of lateral root, including the vascular bundle. Not expressed in lateral root primordia, while directly emerging through the epidermis.

Its subcellular location is the endoplasmic reticulum. Functionally, involved in the final stage of developmental programmed cell death and in intercalation of new cells. Cleaves extensins, thus probably supporting the final cell collapse. In Arabidopsis thaliana (Mouse-ear cress), this protein is KDEL-tailed cysteine endopeptidase CEP2.